A 344-amino-acid chain; its full sequence is Holliday junction branch migration complex subunit RuvB (344 aa).

Residues 1–182 (MRIELLNTPP…FGINSRFDYY (182 aa)) form a large ATPase domain (RuvB-L) region. Residues Ile21, Arg22, Gly63, Lys66, Thr67, Thr68, 129 to 131 (EDF), Arg172, Tyr182, and Arg219 contribute to the ATP site. Residue Thr67 coordinates Mg(2+). A small ATPAse domain (RuvB-S) region spans residues 183–253 (APELLEGIIR…IAMKTLDCLE (71 aa)). A head domain (RuvB-H) region spans residues 256 to 344 (EEGLDDMDKK…ISLFDAQPTS (89 aa)). Residues Arg311 and Arg316 each contribute to the DNA site.

Belongs to the RuvB family. As to quaternary structure, homohexamer. Forms an RuvA(8)-RuvB(12)-Holliday junction (HJ) complex. HJ DNA is sandwiched between 2 RuvA tetramers; dsDNA enters through RuvA and exits via RuvB. An RuvB hexamer assembles on each DNA strand where it exits the tetramer. Each RuvB hexamer is contacted by two RuvA subunits (via domain III) on 2 adjacent RuvB subunits; this complex drives branch migration. In the full resolvosome a probable DNA-RuvA(4)-RuvB(12)-RuvC(2) complex forms which resolves the HJ.

The protein localises to the cytoplasm. It carries out the reaction ATP + H2O = ADP + phosphate + H(+). The RuvA-RuvB-RuvC complex processes Holliday junction (HJ) DNA during genetic recombination and DNA repair, while the RuvA-RuvB complex plays an important role in the rescue of blocked DNA replication forks via replication fork reversal (RFR). RuvA specifically binds to HJ cruciform DNA, conferring on it an open structure. The RuvB hexamer acts as an ATP-dependent pump, pulling dsDNA into and through the RuvAB complex. RuvB forms 2 homohexamers on either side of HJ DNA bound by 1 or 2 RuvA tetramers; 4 subunits per hexamer contact DNA at a time. Coordinated motions by a converter formed by DNA-disengaged RuvB subunits stimulates ATP hydrolysis and nucleotide exchange. Immobilization of the converter enables RuvB to convert the ATP-contained energy into a lever motion, pulling 2 nucleotides of DNA out of the RuvA tetramer per ATP hydrolyzed, thus driving DNA branch migration. The RuvB motors rotate together with the DNA substrate, which together with the progressing nucleotide cycle form the mechanistic basis for DNA recombination by continuous HJ branch migration. Branch migration allows RuvC to scan DNA until it finds its consensus sequence, where it cleaves and resolves cruciform DNA. The protein is Holliday junction branch migration complex subunit RuvB of Pelodictyon phaeoclathratiforme (strain DSM 5477 / BU-1).